A 1275-amino-acid chain; its full sequence is ATP-dependent helicase/nuclease subunit A (1275 aa).

In terms of domain architecture, UvrD-like helicase ATP-binding spans P4–R481. A25–T32 lines the ATP pocket. The UvrD-like helicase C-terminal domain occupies T531 to G839.

The protein belongs to the helicase family. AddA subfamily. Heterodimer of AddA and AddB/RexB. Mg(2+) serves as cofactor.

The catalysed reaction is Couples ATP hydrolysis with the unwinding of duplex DNA by translocating in the 3'-5' direction.. It carries out the reaction ATP + H2O = ADP + phosphate + H(+). Functionally, the heterodimer acts as both an ATP-dependent DNA helicase and an ATP-dependent, dual-direction single-stranded exonuclease. Recognizes the chi site generating a DNA molecule suitable for the initiation of homologous recombination. The AddA nuclease domain is required for chi fragment generation; this subunit has the helicase and 3' -&gt; 5' nuclease activities. In Clostridioides difficile (strain 630) (Peptoclostridium difficile), this protein is ATP-dependent helicase/nuclease subunit A.